Consider the following 692-residue polypeptide: Ribonuclease R (692 aa).

One can recognise an RNB domain in the interval 204 to 525 (RKDLRDLLCF…IVHRLLFHPL (322 aa)). The 86-residue stretch at 563–648 (KKFLDEQPAT…LTQAIEWTLI (86 aa)) folds into the S1 motif domain. Positions 651-692 (KERSSSKKKKAKAKSNATQVKKKSSSKKKKAVSKAKKNRGGK) are disordered. Residues 670 to 692 (VKKKSSSKKKKAVSKAKKNRGGK) show a composition bias toward basic residues.

Belongs to the RNR ribonuclease family. RNase R subfamily.

Its subcellular location is the cytoplasm. It catalyses the reaction Exonucleolytic cleavage in the 3'- to 5'-direction to yield nucleoside 5'-phosphates.. Its function is as follows. 3'-5' exoribonuclease that releases 5'-nucleoside monophosphates and is involved in maturation of structured RNAs. In Chlamydia muridarum (strain MoPn / Nigg), this protein is Ribonuclease R.